A 699-amino-acid chain; its full sequence is Elongation factor G (699 aa).

The tr-type G domain occupies 8–283 (EHIRNIGICA…AVVDFLPSPI (276 aa)). Residues 17–24 (AHIDAGKT), 81–85 (DTPGH), and 135–138 (NKMD) each bind GTP.

It belongs to the TRAFAC class translation factor GTPase superfamily. Classic translation factor GTPase family. EF-G/EF-2 subfamily.

Its subcellular location is the cytoplasm. Catalyzes the GTP-dependent ribosomal translocation step during translation elongation. During this step, the ribosome changes from the pre-translocational (PRE) to the post-translocational (POST) state as the newly formed A-site-bound peptidyl-tRNA and P-site-bound deacylated tRNA move to the P and E sites, respectively. Catalyzes the coordinated movement of the two tRNA molecules, the mRNA and conformational changes in the ribosome. This Rickettsia rickettsii (strain Iowa) protein is Elongation factor G.